A 428-amino-acid chain; its full sequence is MSVTVVLGSQWGDEGKGKLVDILAADIDVCARCAGGNNAGHTIIVPIDGVLKTFAFHLLPSGLVNPRCTGLIGSGLVVHVPSFFAELDALEAQGLDCSNRLFISDRAHLVFDFHQIVDGLKEVELGGKSIGTTKRGIGPAYSGKASRSGLRVHHLFDHETFAEKFRKLVEGRYKRYGHFEYDTEGEIERYKKLAERLRPYVVDSVAYIHKAITSGKKVLVEGANALMLDLDFGTYPYVTSSSTTIGGVCTGLGIPPKMIGRTIGVVKAYTTRVGGGPFPAEQLNDIGVHLQEVGREYGTTTGRRRRCGWLDLVVLRHSSMINGYDSLNLTKLDVLDQLPEIKVATRYLVDGKELEGFPADLELLANVDVEYVTLPGWQSSIENITTYDDLPENCKGYIKFIEDSLNVPIEWIGVGPARKSMVRKELKQ.

GTP contacts are provided by residues 12-18 (GDEGKGK) and 40-42 (GHT). Aspartate 13 functions as the Proton acceptor in the catalytic mechanism. Mg(2+) contacts are provided by aspartate 13 and glycine 40. Residues 13–16 (DEGK), 38–41 (NAGH), threonine 133, arginine 147, asparagine 224, threonine 239, and arginine 303 contribute to the IMP site. Histidine 41 functions as the Proton donor in the catalytic mechanism. 299 to 305 (TTTGRRR) serves as a coordination point for substrate. GTP contacts are provided by residues arginine 305, 331 to 333 (KLD), and 413 to 415 (GVG).

Belongs to the adenylosuccinate synthetase family. Homodimer. It depends on Mg(2+) as a cofactor.

It is found in the cytoplasm. It catalyses the reaction IMP + L-aspartate + GTP = N(6)-(1,2-dicarboxyethyl)-AMP + GDP + phosphate + 2 H(+). Its pathway is purine metabolism; AMP biosynthesis via de novo pathway; AMP from IMP: step 1/2. In terms of biological role, plays an important role in the de novo pathway and in the salvage pathway of purine nucleotide biosynthesis. Catalyzes the first committed step in the biosynthesis of AMP from IMP. The polypeptide is Adenylosuccinate synthetase 1 (Laccaria bicolor (strain S238N-H82 / ATCC MYA-4686) (Bicoloured deceiver)).